Consider the following 158-residue polypeptide: Protein Smg homolog (158 aa).

It belongs to the Smg family.

The sequence is that of Protein Smg homolog from Coxiella burnetii (strain RSA 331 / Henzerling II).